Consider the following 392-residue polypeptide: Stilbene synthase 3 (392 aa).

Residue 55-58 participates in substrate binding; that stretch reads KFNR. Residue C164 is part of the active site. Substrate-binding positions include L267 and 305 to 307; that span reads GGP.

Belongs to the thiolase-like superfamily. Chalcone/stilbene synthases family. As to quaternary structure, homodimer.

Its subcellular location is the cytoplasm. It carries out the reaction 4-coumaroyl-CoA + 3 malonyl-CoA + 3 H(+) = trans-resveratrol + 4 CO2 + 4 CoA. Its pathway is phytoalexin biosynthesis; 3,4',5-trihydroxystilbene biosynthesis; 3,4',5-trihydroxystilbene from trans-4-coumarate: step 2/2. Mediates resistance to pathogens which are sensitive to stilbenes. The sequence is that of Stilbene synthase 3 from Vitis vinifera (Grape).